The primary structure comprises 408 residues: 2-acyl-4-prenylphloroglucinol 6-prenyltransferase, chloroplastic (408 aa).

The N-terminal 46 residues, 1–46 (MELSSACNLSLKPNYYYYPTSLFPSNNSYNNLKASSYYQTQRPIKC), are a transit peptide targeting the chloroplast. 9 consecutive transmembrane segments (helical) span residues 119 to 139 (PIPF…ELLK), 146 to 166 (WQLM…HIYI), 193 to 213 (SVKS…LLMI), 217 to 237 (CGLF…MYSV), 257 to 277 (IGIG…GLPF), 281 to 301 (PPFT…SILK), 326 to 346 (IVLV…GVAI), 355 to 375 (YIMI…TWLL), and 388 to 408 (YYHF…FIST).

This sequence belongs to the UbiA prenyltransferase family. Homo- and heteromer. Interacts with PT1L, forming a functional metabolon. The cofactor is Mg(2+). As to expression, expressed in trichomes.

The protein localises to the plastid. Its subcellular location is the chloroplast membrane. It catalyses the reaction a 2-acyl-4-prenylphloroglucinol + dimethylallyl diphosphate = a 2-acyl-4,6-diprenylphloroglucinol + diphosphate. It carries out the reaction a 2-acyl-4,6-diprenylphloroglucinol + dimethylallyl diphosphate = a 2-acyl-4,6,6-triprenylphloroglucinol + diphosphate. Its pathway is secondary metabolite biosynthesis. Functionally, involved in the biosynthesis of prenylated phenolics natural products which contribute to the bitter taste of beer and display broad biological activities. Catalyzes the two last prenylation steps in the beta-bitter acid pathway. Uses dimethylallyl diphosphate (DMAPP) as the prenyl donor. This Humulus lupulus (European hop) protein is 2-acyl-4-prenylphloroglucinol 6-prenyltransferase, chloroplastic.